We begin with the raw amino-acid sequence, 367 residues long: Polyenoic acids biosynthesis gene cluster protein Ba17b (367 aa).

3 helical membrane passes run 16 to 36 (LEVF…LRFY), 50 to 70 (WLII…IGAV), and 90 to 110 (LVAF…TEGL). Asn-133 carries an N-linked (GlcNAc...) asparagine glycan. 3 helical membrane-spanning segments follow: residues 137-157 (LVLV…CTPF), 183-203 (FPNI…VWGL), and 211-231 (LVLV…GGDS). N-linked (GlcNAc...) asparagine glycosylation occurs at Asn-245. Residues 259-279 (LIIWTVCEPGVYLIAACLLVY) traverse the membrane as a helical segment.

It belongs to the SAT4 family.

The protein resides in the membrane. It functions in the pathway secondary metabolite biosynthesis. Its function is as follows. Part of the gene cluster that mediates the biosynthesis of (2Z,4E,6E,10E)-9-hydroxydodeca-2,4,6,10-tetraenoic acid (BAA), (2E,4E,6E,10E)-9-hydroxydodeca-2,4,6,10-tetraenoic acid (BAB), and (2Z,4E,6E)-octa-2,4,6-trienedioic acid (PBA). The highly reducing polyketide synthase Ba17a is sufficent to produce PBA and BAA. The still to be characterized protein Ba17b leads to an increased production of BAA as well as to the production of the new compound BAB. BAA does not possess insecticidal activity against G.mellonella larvae, however, both BAA and BAB increase the growth of Candida albicans and BAA can mitigate the fungicidal effects of fluconazole over C.albicans, suggesting that generalist pathogens such as M.anisopliae, can potentially manipulate the yeast microbiota found in arthropods (and anywhere else) by the activity of compounds as BAA and BAB. The sequence is that of Polyenoic acids biosynthesis gene cluster protein Ba17b from Metarhizium anisopliae (Entomophthora anisopliae).